The chain runs to 120 residues: Large ribosomal subunit protein uL14 (120 aa).

This sequence belongs to the universal ribosomal protein uL14 family. As to quaternary structure, part of the 50S ribosomal subunit. Forms a cluster with proteins L3 and L19. In the 70S ribosome, L14 and L19 interact and together make contacts with the 16S rRNA in bridges B5 and B8.

Functionally, binds to 23S rRNA. Forms part of two intersubunit bridges in the 70S ribosome. The sequence is that of Large ribosomal subunit protein uL14 from Phytoplasma australiense.